Here is a 69-residue protein sequence, read N- to C-terminus: Toxin Lc b (69 aa).

Intrachain disulfides connect Cys3–Cys20, Cys13–Cys41, Cys45–Cys56, and Cys57–Cys62.

This sequence belongs to the three-finger toxin family. Long-chain subfamily. Type II alpha-neurotoxin sub-subfamily. In terms of tissue distribution, expressed by the venom gland.

It localises to the secreted. In terms of biological role, binds with high affinity to muscular nicotinic acetylcholine receptors (nAChRs), whereas it binds with a low affinity to neuronal alpha-7/CHRNA7 nAChRs. In Laticauda colubrina (Yellow-lipped sea krait), this protein is Toxin Lc b.